We begin with the raw amino-acid sequence, 296 residues long: Maltose/maltodextrin transport system permease protein MalG (296 aa).

Residues 1 to 12 (MAMVQPKSQKWR) lie on the Cytoplasmic side of the membrane. A helical transmembrane segment spans residues 13 to 35 (LLATHLLMFTFIAMILFPLLMVI). Residues 36 to 88 (TISLRPGNFATGSLIPENISWEHWKLALGYSVVSPDGRVTPPPFPVMLWLWNS) are Periplasmic-facing. The 197-residue stretch at 85-281 (LWNSVKVAFI…LPITIVFLVA (197 aa)) folds into the ABC transmembrane type-1 domain. The helical transmembrane segment at 89–111 (VKVAFITAVGIVTLSTTCAYAFA) threads the bilayer. Residues 112 to 123 (RMHFRGKSTLLK) are Cytoplasmic-facing. Residues 124–143 (GMLIFQMFPAVLSLVALYAL) form a helical membrane-spanning segment. Over 144-152 (FDRLGEYVP) the chain is Periplasmic. A helical transmembrane segment spans residues 153 to 175 (FIGLNTHGGVIFAYLGGIALHVW). Topologically, residues 176–205 (TIKGYFETIDGSLEEAAALDGATPWQAFRM) are cytoplasmic. A helical transmembrane segment spans residues 206–228 (VLLPLSVPILAVVFILSFIGVIT). At 229-257 (EVPVASLLLRDVNNYTLAVGMQQYLNPQN) the chain is on the periplasmic side. The helical transmembrane segment at 258–280 (YLWGDFAAAAVLSALPITIVFLV) threads the bilayer. Residues 281-296 (AQRWLVSGLTAGGVKG) are Cytoplasmic-facing.

The protein belongs to the binding-protein-dependent transport system permease family. MalFG subfamily. As to quaternary structure, the complex is composed of two ATP-binding proteins (MalK), two transmembrane proteins (MalG and MalF) and a solute-binding protein (MalE).

It localises to the cell inner membrane. Functionally, part of the ABC transporter complex MalEFGK involved in maltose/maltodextrin import. Probably responsible for the translocation of the substrate across the membrane. The protein is Maltose/maltodextrin transport system permease protein MalG (malG) of Photorhabdus laumondii subsp. laumondii (strain DSM 15139 / CIP 105565 / TT01) (Photorhabdus luminescens subsp. laumondii).